The following is a 94-amino-acid chain: Co-chaperonin GroES (94 aa).

This sequence belongs to the GroES chaperonin family. In terms of assembly, heptamer of 7 subunits arranged in a ring. Interacts with the chaperonin GroEL.

It is found in the cytoplasm. Together with the chaperonin GroEL, plays an essential role in assisting protein folding. The GroEL-GroES system forms a nano-cage that allows encapsulation of the non-native substrate proteins and provides a physical environment optimized to promote and accelerate protein folding. GroES binds to the apical surface of the GroEL ring, thereby capping the opening of the GroEL channel. The polypeptide is Co-chaperonin GroES (Pediococcus pentosaceus (strain ATCC 25745 / CCUG 21536 / LMG 10740 / 183-1w)).